Here is a 322-residue protein sequence, read N- to C-terminus: Cytochrome c biogenesis protein CcsA (322 aa).

The next 6 helical transmembrane spans lie at isoleucine 9–leucine 29, glycine 44–glycine 64, methionine 143–isoleucine 163, valine 226–asparagine 246, glutamate 259–arginine 276, and isoleucine 289–isoleucine 309.

The protein belongs to the CcmF/CycK/Ccl1/NrfE/CcsA family. In terms of assembly, may interact with Ccs1.

The protein resides in the plastid. Its subcellular location is the chloroplast thylakoid membrane. In terms of biological role, required during biogenesis of c-type cytochromes (cytochrome c6 and cytochrome f) at the step of heme attachment. The polypeptide is Cytochrome c biogenesis protein CcsA (Triticum aestivum (Wheat)).